The chain runs to 237 residues: 4-hydroxy-tetrahydrodipicolinate reductase (237 aa).

Residues 11–16, 92–94, and 116–119 each bind NAD(+); these read GASGRM, GTT, and GSNF. The active-site Proton donor/acceptor is H148. H149 contacts (S)-2,3,4,5-tetrahydrodipicolinate. K152 (proton donor) is an active-site residue. Residue 158 to 159 participates in (S)-2,3,4,5-tetrahydrodipicolinate binding; it reads GS.

The protein belongs to the DapB family.

Its subcellular location is the cytoplasm. It catalyses the reaction (S)-2,3,4,5-tetrahydrodipicolinate + NAD(+) + H2O = (2S,4S)-4-hydroxy-2,3,4,5-tetrahydrodipicolinate + NADH + H(+). The catalysed reaction is (S)-2,3,4,5-tetrahydrodipicolinate + NADP(+) + H2O = (2S,4S)-4-hydroxy-2,3,4,5-tetrahydrodipicolinate + NADPH + H(+). It participates in amino-acid biosynthesis; L-lysine biosynthesis via DAP pathway; (S)-tetrahydrodipicolinate from L-aspartate: step 4/4. Catalyzes the conversion of 4-hydroxy-tetrahydrodipicolinate (HTPA) to tetrahydrodipicolinate. The polypeptide is 4-hydroxy-tetrahydrodipicolinate reductase (Xylella fastidiosa (strain M12)).